The primary structure comprises 128 residues: uncharacterized protein (128 aa).

Residues Met1–Val50 are disordered. Basic and acidic residues predominate over residues Pro18 to Pro36.

This is an uncharacterized protein from Bacillus anthracis.